The chain runs to 260 residues: Triosephosphate isomerase (260 aa).

11–13 (NWK) provides a ligand contact to substrate. The Electrophile role is filled by histidine 103. The active-site Proton acceptor is glutamate 175. Substrate is bound by residues glycine 181, serine 220, and 241 to 242 (GG).

The protein belongs to the triosephosphate isomerase family. Homodimer.

The protein localises to the cytoplasm. The catalysed reaction is D-glyceraldehyde 3-phosphate = dihydroxyacetone phosphate. Its pathway is carbohydrate biosynthesis; gluconeogenesis. It functions in the pathway carbohydrate degradation; glycolysis; D-glyceraldehyde 3-phosphate from glycerone phosphate: step 1/1. Its function is as follows. Involved in the gluconeogenesis. Catalyzes stereospecifically the conversion of dihydroxyacetone phosphate (DHAP) to D-glyceraldehyde-3-phosphate (G3P). The polypeptide is Triosephosphate isomerase (Shewanella halifaxensis (strain HAW-EB4)).